We begin with the raw amino-acid sequence, 379 residues long: Ribosomal RNA small subunit methyltransferase H (379 aa).

S-adenosyl-L-methionine contacts are provided by residues 71 to 73 (GGH), Glu90, Asp157, and His164.

This sequence belongs to the methyltransferase superfamily. RsmH family.

It is found in the cytoplasm. It catalyses the reaction cytidine(1402) in 16S rRNA + S-adenosyl-L-methionine = N(4)-methylcytidine(1402) in 16S rRNA + S-adenosyl-L-homocysteine + H(+). Functionally, specifically methylates the N4 position of cytidine in position 1402 (C1402) of 16S rRNA. The protein is Ribosomal RNA small subunit methyltransferase H of Treponema pallidum (strain Nichols).